The chain runs to 914 residues: Neutral alpha-glucosidase C (914 aa).

Residue D511 is the Nucleophile of the active site. Residue E514 is part of the active site. Catalysis depends on D587, which acts as the Proton donor.

Belongs to the glycosyl hydrolase 31 family.

The catalysed reaction is Hydrolysis of terminal, non-reducing (1-&gt;4)-linked alpha-D-glucose residues with release of alpha-D-glucose.. Has alpha-glucosidase activity. This chain is Neutral alpha-glucosidase C (GANC), found in Homo sapiens (Human).